Reading from the N-terminus, the 434-residue chain is 3-phosphoshikimate 1-carboxyvinyltransferase (434 aa).

Residues Lys-15, Ser-16, and Arg-20 each coordinate 3-phosphoshikimate. Lys-15 lines the phosphoenolpyruvate pocket. Positions 96 and 124 each coordinate phosphoenolpyruvate. Positions 169, 171, 195, 319, and 346 each coordinate 3-phosphoshikimate. Gln-171 contacts phosphoenolpyruvate. Asp-319 acts as the Proton acceptor in catalysis. Residues Arg-350 and Arg-394 each contribute to the phosphoenolpyruvate site.

The protein belongs to the EPSP synthase family. Monomer.

It localises to the cytoplasm. The enzyme catalyses 3-phosphoshikimate + phosphoenolpyruvate = 5-O-(1-carboxyvinyl)-3-phosphoshikimate + phosphate. The protein operates within metabolic intermediate biosynthesis; chorismate biosynthesis; chorismate from D-erythrose 4-phosphate and phosphoenolpyruvate: step 6/7. Functionally, catalyzes the transfer of the enolpyruvyl moiety of phosphoenolpyruvate (PEP) to the 5-hydroxyl of shikimate-3-phosphate (S3P) to produce enolpyruvyl shikimate-3-phosphate and inorganic phosphate. The sequence is that of 3-phosphoshikimate 1-carboxyvinyltransferase from Prosthecochloris aestuarii (strain DSM 271 / SK 413).